The primary structure comprises 1244 residues: Putative late blight resistance protein homolog R1A-4 (1244 aa).

Coiled coils occupy residues 411–434 and 526–548; these read RYSDSLAFLKNQLQVIQTEFESLQ and PRMNEEIVGFKDVIENLRNQLLN. In terms of domain architecture, NB-ARC spans 527–755; it reads RMNEEIVGFK…ECWEQVANDL (229 aa). Residue 560–567 coordinates ATP; it reads GMPGLGKT. 5 LRR repeats span residues 978–1004, 1079–1103, 1127–1150, 1153–1178, and 1213–1237; these read LWNLETLILNRRSVVHKILLPSTVWDM, PIRLEILKLYRSNAFKAIPFCISAP, LKNLEVLKLYYVEFGDHREWKVSN, FPQLKILKLEDVSLMKWIVADDAFPN, and ESVVKSAMNIQETQVEDYQNTNFKL.

This sequence belongs to the disease resistance NB-LRR family.

It localises to the cytoplasm. It is found in the membrane. In terms of biological role, confers resistance to late blight (Phytophthora infestans) races carrying the avirulence gene Avr1. Resistance proteins guard the plant against pathogens that contain an appropriate avirulence protein via an indirect interaction with this avirulence protein. That triggers a defense system including the hypersensitive response, which restricts the pathogen growth. This chain is Putative late blight resistance protein homolog R1A-4 (R1A-4), found in Solanum demissum (Wild potato).